Reading from the N-terminus, the 125-residue chain is Large ribosomal subunit protein bL12 (125 aa).

This sequence belongs to the bacterial ribosomal protein bL12 family. In terms of assembly, homodimer. Part of the ribosomal stalk of the 50S ribosomal subunit. Forms a multimeric L10(L12)X complex, where L10 forms an elongated spine to which 2 to 4 L12 dimers bind in a sequential fashion. Binds GTP-bound translation factors.

Its function is as follows. Forms part of the ribosomal stalk which helps the ribosome interact with GTP-bound translation factors. Is thus essential for accurate translation. The protein is Large ribosomal subunit protein bL12 of Afipia carboxidovorans (strain ATCC 49405 / DSM 1227 / KCTC 32145 / OM5) (Oligotropha carboxidovorans).